Here is a 373-residue protein sequence, read N- to C-terminus: 3 beta-hydroxysteroid dehydrogenase/Delta 5--&gt;4-isomerase type 1 (373 aa).

NADP(+) contacts are provided by residues 10–15 (GAGGFV), tyrosine 155, and lysine 159. Lysine 159 functions as the Proton donor in the catalytic mechanism. Residues 288 to 308 (LPLLYWLAFLLETVSFLLRPV) traverse the membrane as a helical segment.

The protein belongs to the 3-beta-HSD family. In terms of tissue distribution, steroidogenic tissues (includes testes, ovaries and adrenal glands).

It is found in the endoplasmic reticulum membrane. Its subcellular location is the mitochondrion membrane. It carries out the reaction a 3beta-hydroxy-Delta(5)-steroid + NAD(+) = a 3-oxo-Delta(5)-steroid + NADH + H(+). It catalyses the reaction pregnenolone + NAD(+) = pregn-5-ene-3,20-dione + NADH + H(+). The catalysed reaction is 3beta-hydroxyandrost-5-en-17-one + NAD(+) = androst-5-ene-3,17-dione + NADH + H(+). The enzyme catalyses androst-5-en-3beta,17beta-diol + NAD(+) = 17beta-hydroxy-androst-5-en-3-one + NADH + H(+). It carries out the reaction a 3beta-hydroxysteroid + NADP(+) = a 3-oxosteroid + NADPH + H(+). It catalyses the reaction 5alpha-androstane-3beta,17beta-diol + NADP(+) = 17beta-hydroxy-5alpha-androstan-3-one + NADPH + H(+). The catalysed reaction is 3beta-hydroxy-5alpha-androstan-17-one + NADP(+) = 5alpha-androstan-3,17-dione + NADPH + H(+). The enzyme catalyses a 3-oxo-Delta(5)-steroid = a 3-oxo-Delta(4)-steroid. It carries out the reaction pregn-5-ene-3,20-dione = progesterone. It catalyses the reaction androst-5-ene-3,17-dione = androst-4-ene-3,17-dione. The catalysed reaction is 17beta-hydroxy-androst-5-en-3-one = testosterone. The enzyme catalyses 5alpha-androstane-3beta,17beta-diol + NAD(+) = 17beta-hydroxy-5alpha-androstan-3-one + NADH + H(+). It participates in steroid hormone biosynthesis. The protein operates within steroid metabolism. In terms of biological role, a bifunctional enzyme responsible for the oxidation and isomerization of 3beta-hydroxy-Delta(5)-steroid precursors to 3-oxo-Delta(4)-steroids, an essential step in steroid hormone biosynthesis. Specifically catalyzes the conversion of pregnenolone to progesterone, 17alpha-hydroxypregnenolone to 17alpha-hydroxyprogesterone, dehydroepiandrosterone (DHEA) to 4-androstenedione, and androstenediol to testosterone. Additionally, catalyzes the interconversion between 3beta-hydroxy and 3-oxo-5alpha-androstane steroids controlling the bioavalability of the active forms. Specifically converts dihydrotestosterone to its inactive form 5alpha-androstanediol, that does not bind androgen receptor/AR. Also converts androstanedione, a precursor of testosterone and estrone, to epiandrosterone. Expected to use NAD(+) as preferred electron donor for the 3-beta-hydroxy-steroid dehydrogenase activity and NADPH for the 3-ketosteroid reductase activity. The protein is 3 beta-hydroxysteroid dehydrogenase/Delta 5--&gt;4-isomerase type 1 of Mus musculus (Mouse).